The sequence spans 398 residues: GPI mannosyltransferase 1 (398 aa).

9 helical membrane passes run Leu-4–Tyr-24, Trp-79–Leu-99, Met-114–Glu-136, Val-156–Tyr-176, Ile-209–Trp-229, Ile-271–Phe-291, Phe-305–Phe-325, Ile-341–Ala-361, and Gly-375–Ile-395.

This sequence belongs to the PIGM family.

Its subcellular location is the endoplasmic reticulum membrane. It functions in the pathway glycolipid biosynthesis; glycosylphosphatidylinositol-anchor biosynthesis. In terms of biological role, mannosyltransferase involved in glycosylphosphatidylinositol-anchor biosynthesis. Transfers the first alpha-1,4-mannose to GlcN-acyl-PI during GPI precursor assembly. Required for cell wall integrity. The protein is GPI mannosyltransferase 1 (GPI14) of Candida albicans (strain SC5314 / ATCC MYA-2876) (Yeast).